The following is a 316-amino-acid chain: Malate dehydrogenase 2 (316 aa).

Residues 10 to 15 (GGGQIG) and aspartate 34 each bind NAD(+). Residues arginine 83 and arginine 89 each coordinate substrate. NAD(+) is bound by residues asparagine 96 and 119-121 (ISN). Substrate-binding residues include asparagine 121 and arginine 152. The active-site Proton acceptor is histidine 176.

This sequence belongs to the LDH/MDH superfamily. MDH type 3 family.

The catalysed reaction is (S)-malate + NAD(+) = oxaloacetate + NADH + H(+). Catalyzes the reversible oxidation of malate to oxaloacetate. The polypeptide is Malate dehydrogenase 2 (Anaeromyxobacter dehalogenans (strain 2CP-C)).